A 369-amino-acid polypeptide reads, in one-letter code: GTPase Obg (369 aa).

One can recognise an Obg domain in the interval Met-1–Ile-158. The disordered stretch occupies residues Asn-126–Gly-146. Polar residues predominate over residues His-128–Thr-138. The OBG-type G domain maps to Ala-159 to Gln-362. GTP-binding positions include Gly-165–Ser-172, Phe-190–Thr-194, Asp-212–Gly-215, Thr-280–Asp-283, and Ser-343–Ala-345. The Mg(2+) site is built by Ser-172 and Thr-192.

This sequence belongs to the TRAFAC class OBG-HflX-like GTPase superfamily. OBG GTPase family. Monomer. Mg(2+) is required as a cofactor.

The protein resides in the cytoplasm. An essential GTPase which binds GTP, GDP and possibly (p)ppGpp with moderate affinity, with high nucleotide exchange rates and a fairly low GTP hydrolysis rate. Plays a role in control of the cell cycle, stress response, ribosome biogenesis and in those bacteria that undergo differentiation, in morphogenesis control. The polypeptide is GTPase Obg (Sulfurimonas denitrificans (strain ATCC 33889 / DSM 1251) (Thiomicrospira denitrificans (strain ATCC 33889 / DSM 1251))).